Consider the following 205-residue polypeptide: Thymidine kinase (205 aa).

ATP is bound by residues 9–16 and 88–91; these read SAMNAGKT and DECH. The active-site Proton acceptor is the glutamate 89. Zn(2+) is bound by residues cysteine 146, cysteine 148, cysteine 183, and histidine 186.

It belongs to the thymidine kinase family. In terms of assembly, homotetramer.

The protein localises to the cytoplasm. It catalyses the reaction thymidine + ATP = dTMP + ADP + H(+). The sequence is that of Thymidine kinase from Blochmanniella pennsylvanica (strain BPEN).